Consider the following 457-residue polypeptide: Gustatory and odorant receptor 24 (457 aa).

At 1–115 (MSLYFNADTM…GGTAFVLASP (115 aa)) the chain is on the cytoplasmic side. The helical transmembrane segment at 116 to 136 (SMTYCVLFFLLLTVYIAFILL) threads the bilayer. Topologically, residues 137-152 (NRIEIVRTLEGRFEES) are extracellular. A helical membrane pass occupies residues 153–173 (VIAYLFIVNILPILIIPLMWY). Residues 174–209 (ESRKVVSVVNGWVDFETVYRETTGRALELRLRTKAQ) lie on the Cytoplasmic side of the membrane. A helical membrane pass occupies residues 210-230 (VIAILLPILCSLSVAITHVTM). Over 231-237 (VDFKLLQ) the chain is Extracellular. Residues 238-258 (VIPYCVLDTITYMMGGYWYMA) form a helical membrane-spanning segment. The Cytoplasmic portion of the chain corresponds to 259–309 (CETLSITAKILAEDFQRALRHVGPAAKVSEYRSLWLRLSKLARDTGFSTCY). A helical membrane pass occupies residues 310–330 (TFTFICLYLFFIITLSIYGLM). Topologically, residues 331–341 (SQISDGFGVKD) are extracellular. Residues 342–362 (IGLAVTAFCSVGLLFYICDEA) traverse the membrane as a helical segment. The Cytoplasmic portion of the chain corresponds to 363–421 (HYASFNVRTNFQKKLLMVELSWMNTDAQTEINMFLRATEMNPSSINLGGFFDVNRTLFK). A helical transmembrane segment spans residues 422–442 (SLLATMVTYLVVLLQFQISIP). The Extracellular portion of the chain corresponds to 443–457 (DEPSAMLMHSNSSHS). N-linked (GlcNAc...) asparagine glycosylation is present at N453.

This sequence belongs to the insect chemoreceptor superfamily. Gustatory receptor (GR) family. Gr21a subfamily. In terms of tissue distribution, carbon dioxide-responsive neurons coexpress GPRgr22 and GPRgr24 in the maxillary palp, at both larval and adult life stages.

Its subcellular location is the cell membrane. Its function is as follows. Gustatory receptor which mediates acceptance or avoidance behavior, depending on its substrates. GPRgr22 and GPRgr24 together are sufficient for olfactory carbon dioxide-chemosensation. The polypeptide is Gustatory and odorant receptor 24 (Anopheles gambiae (African malaria mosquito)).